We begin with the raw amino-acid sequence, 175 residues long: uncharacterized protein (175 aa).

The HTH marR-type domain occupies 10–157 (LFELYAELIH…AERLFRDLVT (148 aa)). A DNA-binding region (H-T-H motif) is located at residues 68–91 (VTSIAEKMNTTKATVSRISTKLLG).

It is found in the cytoplasm. This is an uncharacterized protein from Bacillus subtilis (strain 168).